The primary structure comprises 507 residues: Histidine ammonia-lyase (507 aa).

The segment at residues 141 to 143 is a cross-link (5-imidazolinone (Ala-Gly)); that stretch reads ASG. Serine 142 bears the 2,3-didehydroalanine (Ser) mark.

It belongs to the PAL/histidase family. Post-translationally, contains an active site 4-methylidene-imidazol-5-one (MIO), which is formed autocatalytically by cyclization and dehydration of residues Ala-Ser-Gly.

The protein localises to the cytoplasm. It carries out the reaction L-histidine = trans-urocanate + NH4(+). It functions in the pathway amino-acid degradation; L-histidine degradation into L-glutamate; N-formimidoyl-L-glutamate from L-histidine: step 1/3. This is Histidine ammonia-lyase from Burkholderia cenocepacia (strain HI2424).